Consider the following 714-residue polypeptide: DNA gyrase subunit B (714 aa).

In terms of domain architecture, Toprim spans 492 to 606; it reads SELYVVEGDS…NGHVFLAQPP (115 aa). Mg(2+) is bound by residues glutamate 498, aspartate 571, and aspartate 573.

Belongs to the type II topoisomerase GyrB family. In terms of assembly, heterotetramer, composed of two GyrA and two GyrB chains. In the heterotetramer, GyrA contains the active site tyrosine that forms a transient covalent intermediate with DNA, while GyrB binds cofactors and catalyzes ATP hydrolysis. The cofactor is Mg(2+). Requires Mn(2+) as cofactor. Ca(2+) serves as cofactor.

It is found in the cytoplasm. The catalysed reaction is ATP-dependent breakage, passage and rejoining of double-stranded DNA.. With respect to regulation, DNA supercoiling is inhibited by EDTA, novobiocin, coumermycin and ciprofloxacin. Functionally, a type II topoisomerase that negatively supercoils closed circular double-stranded DNA in an ATP-dependent manner and also catalyzes the interconversion of other topological isomers of double-stranded DNA rings, including catenanes and knotted rings. Relaxes negatively supercoiled DNA in an ATP-independent manner. A linear reaction intermediate can be trapped in the presence of the antibiotic ciprofloxacin. Negative supercoiling favors strand separation, and DNA replication, transcription, recombination and repair, all of which involve strand separation. Type II topoisomerases break and join 2 DNA strands simultaneously in an ATP-dependent manner. This chain is DNA gyrase subunit B, found in Mycobacterium bovis (strain BCG / Pasteur 1173P2).